A 95-amino-acid polypeptide reads, in one-letter code: Aspartyl/glutamyl-tRNA(Asn/Gln) amidotransferase subunit C (95 aa).

The protein belongs to the GatC family. Heterotrimer of A, B and C subunits.

It catalyses the reaction L-glutamyl-tRNA(Gln) + L-glutamine + ATP + H2O = L-glutaminyl-tRNA(Gln) + L-glutamate + ADP + phosphate + H(+). The catalysed reaction is L-aspartyl-tRNA(Asn) + L-glutamine + ATP + H2O = L-asparaginyl-tRNA(Asn) + L-glutamate + ADP + phosphate + 2 H(+). In terms of biological role, allows the formation of correctly charged Asn-tRNA(Asn) or Gln-tRNA(Gln) through the transamidation of misacylated Asp-tRNA(Asn) or Glu-tRNA(Gln) in organisms which lack either or both of asparaginyl-tRNA or glutaminyl-tRNA synthetases. The reaction takes place in the presence of glutamine and ATP through an activated phospho-Asp-tRNA(Asn) or phospho-Glu-tRNA(Gln). This chain is Aspartyl/glutamyl-tRNA(Asn/Gln) amidotransferase subunit C, found in Roseobacter denitrificans (strain ATCC 33942 / OCh 114) (Erythrobacter sp. (strain OCh 114)).